Consider the following 409-residue polypeptide: Na(+)-translocating NADH-quinone reductase subunit F (409 aa).

A helical transmembrane segment spans residues 5–25 (FIFGIGAFTAIVLVLAVVILI). In terms of domain architecture, 2Fe-2S ferredoxin-type spans 34–128 (GDITISINND…SMDVELPEEV (95 aa)). [2Fe-2S] cluster is bound by residues Cys71, Cys77, Cys80, and Cys112. The region spanning 131-271 (VKKWECTVIS…SGPFGEFFAK (141 aa)) is the FAD-binding FR-type domain.

The protein belongs to the NqrF family. In terms of assembly, composed of six subunits; NqrA, NqrB, NqrC, NqrD, NqrE and NqrF. The cofactor is [2Fe-2S] cluster. It depends on FAD as a cofactor.

It localises to the cell inner membrane. The enzyme catalyses a ubiquinone + n Na(+)(in) + NADH + H(+) = a ubiquinol + n Na(+)(out) + NAD(+). In terms of biological role, NQR complex catalyzes the reduction of ubiquinone-1 to ubiquinol by two successive reactions, coupled with the transport of Na(+) ions from the cytoplasm to the periplasm. The first step is catalyzed by NqrF, which accepts electrons from NADH and reduces ubiquinone-1 to ubisemiquinone by a one-electron transfer pathway. The protein is Na(+)-translocating NADH-quinone reductase subunit F of Mannheimia succiniciproducens (strain KCTC 0769BP / MBEL55E).